The chain runs to 219 residues: Putative protease Do-like 6, chloroplastic (219 aa).

Residues 1–45 (MLFRSVHHIVARFSNSTSTPIHRFFYSPSLLRRRSSFNASLISRC) constitute a chloroplast transit peptide. The interval 61–216 (KIFSFSREPN…YSGQINKKIY (156 aa)) is serine protease. Active-site charge relay system residues include His99, Asp130, and Ser208.

The protein belongs to the peptidase S1B family.

Its subcellular location is the plastid. The protein resides in the chloroplast. Functionally, putative serine protease. This chain is Putative protease Do-like 6, chloroplastic (DEGP6), found in Arabidopsis thaliana (Mouse-ear cress).